Here is a 349-residue protein sequence, read N- to C-terminus: Crinkler effector protein 5 (349 aa).

A signal peptide spans 1-17 (MVKLFCSIVGVAGSPFS). An LQLFLAK domain region spans residues 18–57 (VEVNEGKTVDDLKKAIKAENLDDPTLRNVAPKNLQLFLAK). The segment at 58–108 (KGDAWLRYNEDLDTYLQSEIDTSSYLHMRASWKLSKPTLFGPDVSLGEDVV) is DWL domain. The HVLVXXP motif signature appears at 109-115 (HVLVVVP).

This sequence belongs to the Crinkler effector family.

It localises to the secreted. The protein resides in the host nucleus. In terms of biological role, secreted effector that elicits necrosis in host plants, a characteristic of plant innate immunity. This is Crinkler effector protein 5 from Phytophthora infestans (Potato late blight agent).